A 272-amino-acid chain; its full sequence is ATP synthase subunit a (272 aa).

Helical transmembrane passes span 39–59 (GFWAVHVDTLGWSLFMGLIFI), 103–123 (VAPLALTIFVWVFLMNSLKWI), 124–144 (PVDYIPGLAHAMGLPYFKIVP), 152–172 (FGISLGVFLLIIFYSIKVKGV), 181–201 (FTPFNHWALIPFNLFLEIIGL), 221–241 (VVFILIALLPFYVQWGLNVPW), and 242–262 (AIFHILVIPLQAFIFMVLTVV).

The protein belongs to the ATPase A chain family. F-type ATPases have 2 components, CF(1) - the catalytic core - and CF(0) - the membrane proton channel. CF(1) has five subunits: alpha(3), beta(3), gamma(1), delta(1), epsilon(1). CF(0) has three main subunits: a(1), b(2) and c(9-12). The alpha and beta chains form an alternating ring which encloses part of the gamma chain. CF(1) is attached to CF(0) by a central stalk formed by the gamma and epsilon chains, while a peripheral stalk is formed by the delta and b chains.

The protein resides in the cell inner membrane. Functionally, key component of the proton channel; it plays a direct role in the translocation of protons across the membrane. The chain is ATP synthase subunit a from Ectopseudomonas mendocina (strain ymp) (Pseudomonas mendocina).